A 156-amino-acid polypeptide reads, in one-letter code: Small ribosomal subunit protein uS7 (156 aa).

The protein belongs to the universal ribosomal protein uS7 family. In terms of assembly, part of the 30S ribosomal subunit. Contacts proteins S9 and S11.

One of the primary rRNA binding proteins, it binds directly to 16S rRNA where it nucleates assembly of the head domain of the 30S subunit. Is located at the subunit interface close to the decoding center, probably blocks exit of the E-site tRNA. This chain is Small ribosomal subunit protein uS7, found in Gloeobacter violaceus (strain ATCC 29082 / PCC 7421).